The sequence spans 227 residues: Peroxisomal membrane protein 11B (227 aa).

Over 1–85 the chain is Cytoplasmic; the sequence is MSLDTVDKLV…RNPGATPMIR (85 aa). Residues 86–106 traverse the membrane as a helical segment; the sequence is FLAVLANSGEMVYFFFDHFLW. Over 107–201 the chain is Lumenal; that stretch reads LSRIGSIDAK…IALAEIHPNP (95 aa). A helical transmembrane segment spans residues 202-222; it reads FCNHTITLGISGLVSAWAGWY. Over 223-227 the chain is Cytoplasmic; the sequence is RNWPS.

It belongs to the peroxin-11 family. Homooligomer. Interacts with ARC5 and FIS1B on peroxisomes. As to expression, expressed in roots, leaves and developing siliques.

Its subcellular location is the peroxisome membrane. Its function is as follows. Involved in peroxisomal proliferation. Promotes peroxisomal duplication, aggregation or elongation without fission. This chain is Peroxisomal membrane protein 11B (PEX11B), found in Arabidopsis thaliana (Mouse-ear cress).